The following is a 182-amino-acid chain: Inner membrane-spanning protein YciB (182 aa).

A run of 5 helical transmembrane segments spans residues 22–42 (IYIA…VTYA), 50–70 (MHLI…IFHD), 72–92 (AFIK…LAVS), 118–138 (VTWY…YVAF), and 148–168 (FKVF…VVYL).

The protein belongs to the YciB family.

Its subcellular location is the cell inner membrane. Its function is as follows. Plays a role in cell envelope biogenesis, maintenance of cell envelope integrity and membrane homeostasis. This chain is Inner membrane-spanning protein YciB, found in Shewanella woodyi (strain ATCC 51908 / MS32).